A 92-amino-acid polypeptide reads, in one-letter code: YcgL domain-containing protein Sama_1929 (92 aa).

Residues 1–85 form the YcgL domain; the sequence is MICAVYKSSR…PKDNLLTQHR (85 aa).

The polypeptide is YcgL domain-containing protein Sama_1929 (Shewanella amazonensis (strain ATCC BAA-1098 / SB2B)).